The sequence spans 357 residues: Peptide chain release factor 1 (357 aa).

Position 234 is an N5-methylglutamine (Gln-234).

Belongs to the prokaryotic/mitochondrial release factor family. Post-translationally, methylated by PrmC. Methylation increases the termination efficiency of RF1.

It localises to the cytoplasm. Functionally, peptide chain release factor 1 directs the termination of translation in response to the peptide chain termination codons UAG and UAA. This is Peptide chain release factor 1 from Lactococcus lactis subsp. cremoris (strain SK11).